We begin with the raw amino-acid sequence, 63 residues long: uncharacterized protein (63 aa).

2 consecutive transmembrane segments (helical) span residues 3 to 23 (VFLI…VYYI) and 42 to 62 (ALVC…TKLL).

The protein localises to the cell membrane. This is an uncharacterized protein from Bacillus subtilis (strain 168).